The following is a 197-amino-acid chain: Phosphoheptose isomerase (197 aa).

The SIS domain maps to 34–196 (MVQCLLGGNK…DRTLFPQDDQ (163 aa)). 49-51 (NGG) lines the substrate pocket. Histidine 58 and glutamate 62 together coordinate Zn(2+). Substrate-binding positions include glutamate 62, 91 to 92 (ND), 117 to 119 (STS), serine 122, and glutamine 172. Zn(2+)-binding residues include glutamine 172 and histidine 180.

This sequence belongs to the SIS family. GmhA subfamily. In terms of assembly, homotetramer. Zn(2+) is required as a cofactor.

The protein resides in the cytoplasm. The enzyme catalyses 2 D-sedoheptulose 7-phosphate = D-glycero-alpha-D-manno-heptose 7-phosphate + D-glycero-beta-D-manno-heptose 7-phosphate. It participates in carbohydrate biosynthesis; D-glycero-D-manno-heptose 7-phosphate biosynthesis; D-glycero-alpha-D-manno-heptose 7-phosphate and D-glycero-beta-D-manno-heptose 7-phosphate from sedoheptulose 7-phosphate: step 1/1. In terms of biological role, catalyzes the isomerization of sedoheptulose 7-phosphate in D-glycero-D-manno-heptose 7-phosphate. The chain is Phosphoheptose isomerase from Shewanella loihica (strain ATCC BAA-1088 / PV-4).